The chain runs to 273 residues: Undecaprenyl-diphosphatase (273 aa).

8 helical membrane passes run 13-35 (LGVVEGLTEFLPVSSTGHMIIVG), 45-65 (ANTFEVVIQLGSILAVVVMFW), 90-110 (LSLIHILLGMIPAVVMGLIFH), 116-136 (LFNPVNVMYALIVGGVLLIAA), 157-177 (AFVIGCFQCLALWPGFSRSGA), 190-210 (YAASEFSFLLAVPMMMGATVL), 222-242 (GDVPMFAVGFVMAFIVALIAI), and 252-272 (ISFIPFAIYRFIVAAAVYVVF).

The protein belongs to the UppP family.

Its subcellular location is the cell inner membrane. The catalysed reaction is di-trans,octa-cis-undecaprenyl diphosphate + H2O = di-trans,octa-cis-undecaprenyl phosphate + phosphate + H(+). Catalyzes the dephosphorylation of undecaprenyl diphosphate (UPP). Confers resistance to bacitracin. In Klebsiella pneumoniae subsp. pneumoniae (strain ATCC 700721 / MGH 78578), this protein is Undecaprenyl-diphosphatase.